Reading from the N-terminus, the 274-residue chain is Copper chaperone for superoxide dismutase (274 aa).

One can recognise an HMA domain in the interval V11–V74. C22 and C25 together coordinate Cu cation. K76 is covalently cross-linked (Glycyl lysine isopeptide (Lys-Gly) (interchain with G-Cter in ubiquitin)). The interval A88 to A234 is superoxide dismutase-like. Residues C141 and C227 are joined by a disulfide bond. 4 residues coordinate Zn(2+): H147, H155, H164, and D167. Residues K189, K216, and K241 each participate in a glycyl lysine isopeptide (Lys-Gly) (interchain with G-Cter in ubiquitin) cross-link. Cu cation-binding residues include C244 and C246. S267 is subject to Phosphoserine.

In the C-terminal section; belongs to the Cu-Zn superoxide dismutase family. As to quaternary structure, homodimer, and heterodimer with SOD1. Interacts with COMMD1. Interacts with XIAP/BIRC4. Interacts with SLC31A1(via C-terminal domain); this interaction is Cu(1+)-mediated. The heterodimer CCS:SOD1 interacts with SLC31A1; this heterotrimer is Cu(1+)-mediated and its maintenance is regulated through SOD1 activation. Cu(2+) is required as a cofactor. It depends on Zn(2+) as a cofactor. Ubiquitinion by XIAP/BIRC4 leads to enhancement of its chaperone activity toward its physiologic target, SOD1, rather than proteasomal degradation. XIAP/BIRC4 preferentially ubiquitinates at Lys-241. Ubiquitous.

It localises to the cytoplasm. Functionally, delivers copper to copper zinc superoxide dismutase (SOD1). The sequence is that of Copper chaperone for superoxide dismutase from Mus musculus (Mouse).